We begin with the raw amino-acid sequence, 334 residues long: Ornithine carbamoyltransferase (334 aa).

Residues 56 to 59, glutamine 83, arginine 107, and 134 to 137 contribute to the carbamoyl phosphate site; these read STRT and HPTQ. L-ornithine contacts are provided by residues asparagine 168, aspartate 232, and 236 to 237; that span reads SM. Residues 274–275 and arginine 320 each bind carbamoyl phosphate; that span reads CL.

The protein belongs to the aspartate/ornithine carbamoyltransferase superfamily. OTCase family.

The protein localises to the cytoplasm. It carries out the reaction carbamoyl phosphate + L-ornithine = L-citrulline + phosphate + H(+). The protein operates within amino-acid biosynthesis; L-arginine biosynthesis; L-arginine from L-ornithine and carbamoyl phosphate: step 1/3. Its function is as follows. Reversibly catalyzes the transfer of the carbamoyl group from carbamoyl phosphate (CP) to the N(epsilon) atom of ornithine (ORN) to produce L-citrulline. This chain is Ornithine carbamoyltransferase, found in Escherichia coli (strain 55989 / EAEC).